A 553-amino-acid polypeptide reads, in one-letter code: MGPRPSTKNPVPMMLTVRVALVLSCICPANSIDGRPLAAAGIVVTGDKAVNIYTSSQTGSIIVKLLPNLPKDKEACAKAPLDAYNRTLTTLLTPLGDSIRRIQESVTTSGGRRQKRFIGAIIGGVALGVATAAQITAAAALIQAKQNAANILRLKESIAATNEAVHEVTDGLSQLAVAVGKMQQFVNDQFNKTAQELGCIRIAQQVGVELNLYLTELTTVFGPQITSPALNKLTIQALYNLAGGNMDYLLTKLGVGNNQLSSLIGSGLITGNPILYDSQTQLLGIQVTLPSVGNLNNMRATYLETLSVSTTRGFASALVPKVVTQVGSVIEELDTSYCIETDLDLYCTRIVTFPMSPGIYSCLSGNTSACMYSKTEGALTTPYMTIKGSVIANCKMTTCRCVNPPGIISQNYGEAVSLIDKQSCNVLSLDGITLRLSGEFDATYQKNISIQDSQVIITGNLDISTELGNVNNSISNALNKLEESNSKLDKVNVKLTSTSALITYIVLTIISLVFGILSLVLACYLMYKQKAQQKTLLWLGNNTLDQMRATTKM.

The signal sequence occupies residues 1–31; that stretch reads MGPRPSTKNPVPMMLTVRVALVLSCICPANS. The Extracellular segment spans residues 32 to 500; it reads IDGRPLAAAG…VNVKLTSTSA (469 aa). Disulfide bonds link Cys-76–Cys-199, Cys-338–Cys-347, Cys-362–Cys-370, Cys-394–Cys-399, and Cys-401–Cys-424. An N-linked (GlcNAc...) asparagine; by host glycan is attached at Asn-85. A fusion peptide region spans residues 117–141; sequence FIGAIIGGVALGVATAAQITAAAAL. A coiled-coil region spans residues 142–170; that stretch reads IQAKQNAANILRLKESIAATNEAVHEVTD. N-linked (GlcNAc...) asparagine; by host glycosylation is present at Asn-191. Asn-366 is a glycosylation site (N-linked (GlcNAc...) asparagine; by host). Asn-447 and Asn-471 each carry an N-linked (GlcNAc...) asparagine; by host glycan. A coiled-coil region spans residues 466-491; that stretch reads ELGNVNNSISNALNKLEESNSKLDKV. A helical transmembrane segment spans residues 501–521; the sequence is LITYIVLTIISLVFGILSLVL. Over 522–553 the chain is Cytoplasmic; that stretch reads ACYLMYKQKAQQKTLLWLGNNTLDQMRATTKM. Cys-523 carries the S-palmitoyl cysteine; by host lipid modification.

It belongs to the paramyxoviruses fusion glycoprotein family. As to quaternary structure, homotrimer of disulfide-linked F1-F2. The inactive precursor F0 is glycosylated and proteolytically cleaved into F1 and F2 to be functionally active. The cleavage is mediated by cellular proteases during the transport and maturation of the polypeptide.

The protein resides in the virion membrane. It localises to the host cell membrane. Functionally, class I viral fusion protein. Under the current model, the protein has at least 3 conformational states: pre-fusion native state, pre-hairpin intermediate state, and post-fusion hairpin state. During viral and plasma cell membrane fusion, the heptad repeat (HR) regions assume a trimer-of-hairpins structure, positioning the fusion peptide in close proximity to the C-terminal region of the ectodomain. The formation of this structure appears to drive apposition and subsequent fusion of viral and plasma cell membranes. Directs fusion of viral and cellular membranes leading to delivery of the nucleocapsid into the cytoplasm. This fusion is pH independent and occurs directly at the outer cell membrane. The trimer of F1-F2 (F protein) probably interacts with HN at the virion surface. Upon HN binding to its cellular receptor, the hydrophobic fusion peptide is unmasked and interacts with the cellular membrane, inducing the fusion between cell and virion membranes. Later in infection, F proteins expressed at the plasma membrane of infected cells could mediate fusion with adjacent cells to form syncytia, a cytopathic effect that could lead to tissue necrosis. The protein is Fusion glycoprotein F0 (F) of Gallus gallus (Chicken).